A 143-amino-acid polypeptide reads, in one-letter code: Transcription antitermination protein NusB (143 aa).

Belongs to the NusB family.

Involved in transcription antitermination. Required for transcription of ribosomal RNA (rRNA) genes. Binds specifically to the boxA antiterminator sequence of the ribosomal RNA (rrn) operons. In Streptomyces griseus subsp. griseus (strain JCM 4626 / CBS 651.72 / NBRC 13350 / KCC S-0626 / ISP 5235), this protein is Transcription antitermination protein NusB.